A 156-amino-acid polypeptide reads, in one-letter code: MSRRNAAEKRPVLPDPQFNNRLATMMVARLMKHGKKSTAQRILSDAFGLINERTGSDPIELFETAVKNATPLVEVRARRVGGATYQVPMEVRQERGTAMALRWLVNFSRSRNGRSMAHKLAGELMDAANEAGNAVRKREETHKMAEANKAFAHYRY.

The protein belongs to the universal ribosomal protein uS7 family. Part of the 30S ribosomal subunit. Contacts proteins S9 and S11.

In terms of biological role, one of the primary rRNA binding proteins, it binds directly to 16S rRNA where it nucleates assembly of the head domain of the 30S subunit. Is located at the subunit interface close to the decoding center, probably blocks exit of the E-site tRNA. The sequence is that of Small ribosomal subunit protein uS7 from Prochlorococcus marinus (strain MIT 9211).